The following is a 415-amino-acid chain: MFS-type transporter FVEG_12626 (415 aa).

The span at 1-18 shows a compositional bias: basic and acidic residues; sequence MDPDTEQMRVEKPNHEQP. Residues 1 to 22 form a disordered region; sequence MDPDTEQMRVEKPNHEQPKPNT. 6 helical membrane-spanning segments follow: residues 27 to 47, 63 to 83, 93 to 113, 118 to 138, 151 to 171, and 178 to 198; these read GGFK…VGVF, TVSW…PFVG, YLLL…SISS, YILS…YPSF, LALG…PIVV, and IGFG…LLVT. N199 carries an N-linked (GlcNAc...) asparagine glycan. 6 helical membrane-spanning segments follow: residues 227–247, 264–284, 290–310, 318–338, 354–374, and 386–406; these read FILT…PITF, YLVS…GYIA, FNVS…LWLP, IAFA…SPAL, TMYA…GALI, and VFAG…RLYI.

This sequence belongs to the major facilitator superfamily. Monocarboxylate porter (TC 2.A.1.13) family.

It localises to the membrane. MFS-type transporter; part of the Fusarium detoxification of benzoxazolinone cluster 2 (FDB2) involved in the degradation of benzoxazolinones produced by the host plant. Maize, wheat, and rye produce the 2 benzoxazinone phytoanticipins 2,4-dihy-droxy-7-methoxy-1,4-benzoxazin-3-one (DIMBOA) and 2,4-dihydroxy-1,4-benzoxazin-3-one (DIBOA) that, due to their inherent instability once released, spontaneously degrade to the more stable corresponding benzoxazolinones, 6-methoxy-2-benzoxazolinone (MBOA) and 2-benzoxazolinone (BOA), respectively. In Gibberella moniliformis (strain M3125 / FGSC 7600) (Maize ear and stalk rot fungus), this protein is MFS-type transporter FVEG_12626.